We begin with the raw amino-acid sequence, 196 residues long: GTP cyclohydrolase-2 (196 aa).

49-53 (RVHSE) serves as a coordination point for GTP. Zn(2+) contacts are provided by cysteine 54, cysteine 65, and cysteine 67. GTP-binding positions include glutamine 70, 92–94 (EGR), and threonine 114. Aspartate 126 serves as the catalytic Proton acceptor. Arginine 128 serves as the catalytic Nucleophile. Positions 149 and 154 each coordinate GTP.

This sequence belongs to the GTP cyclohydrolase II family. As to quaternary structure, homodimer. It depends on Zn(2+) as a cofactor.

It carries out the reaction GTP + 4 H2O = 2,5-diamino-6-hydroxy-4-(5-phosphoribosylamino)-pyrimidine + formate + 2 phosphate + 3 H(+). Its pathway is cofactor biosynthesis; riboflavin biosynthesis; 5-amino-6-(D-ribitylamino)uracil from GTP: step 1/4. Catalyzes the conversion of GTP to 2,5-diamino-6-ribosylamino-4(3H)-pyrimidinone 5'-phosphate (DARP), formate and pyrophosphate. The polypeptide is GTP cyclohydrolase-2 (Shigella dysenteriae serotype 1 (strain Sd197)).